We begin with the raw amino-acid sequence, 379 residues long: UDP-4-amino-4-deoxy-L-arabinose--oxoglutarate aminotransferase (379 aa).

Residue K182 is modified to N6-(pyridoxal phosphate)lysine.

This sequence belongs to the DegT/DnrJ/EryC1 family. ArnB subfamily. In terms of assembly, homodimer. Pyridoxal 5'-phosphate is required as a cofactor.

The catalysed reaction is UDP-4-amino-4-deoxy-beta-L-arabinose + 2-oxoglutarate = UDP-beta-L-threo-pentopyranos-4-ulose + L-glutamate. The protein operates within nucleotide-sugar biosynthesis; UDP-4-deoxy-4-formamido-beta-L-arabinose biosynthesis; UDP-4-deoxy-4-formamido-beta-L-arabinose from UDP-alpha-D-glucuronate: step 2/3. It participates in bacterial outer membrane biogenesis; lipopolysaccharide biosynthesis. In terms of biological role, catalyzes the conversion of UDP-4-keto-arabinose (UDP-Ara4O) to UDP-4-amino-4-deoxy-L-arabinose (UDP-L-Ara4N). The modified arabinose is attached to lipid A and is required for resistance to polymyxin and cationic antimicrobial peptides. In Escherichia coli (strain K12 / DH10B), this protein is UDP-4-amino-4-deoxy-L-arabinose--oxoglutarate aminotransferase.